A 457-amino-acid polypeptide reads, in one-letter code: Ribulose bisphosphate carboxylase large chain (457 aa).

Residues 1–2 (MS) constitute a propeptide that is removed on maturation. N-acetylproline is present on P3. The residue at position 14 (K14) is an N6,N6,N6-trimethyllysine. N123 and T173 together coordinate substrate. K175 (proton acceptor) is an active-site residue. A substrate-binding site is contributed by K177. The Mg(2+) site is built by K201, D203, and E204. K201 is modified (N6-carboxylysine). H294 functions as the Proton acceptor in the catalytic mechanism. 3 residues coordinate substrate: R295, H327, and S379.

This sequence belongs to the RuBisCO large chain family. Type I subfamily. Heterohexadecamer of 8 large chains and 8 small chains; disulfide-linked. The disulfide link is formed within the large subunit homodimers. Mg(2+) serves as cofactor. In terms of processing, the disulfide bond which can form in the large chain dimeric partners within the hexadecamer appears to be associated with oxidative stress and protein turnover.

It localises to the plastid. It is found in the chloroplast. The catalysed reaction is 2 (2R)-3-phosphoglycerate + 2 H(+) = D-ribulose 1,5-bisphosphate + CO2 + H2O. It carries out the reaction D-ribulose 1,5-bisphosphate + O2 = 2-phosphoglycolate + (2R)-3-phosphoglycerate + 2 H(+). Its function is as follows. RuBisCO catalyzes two reactions: the carboxylation of D-ribulose 1,5-bisphosphate, the primary event in carbon dioxide fixation, as well as the oxidative fragmentation of the pentose substrate in the photorespiration process. Both reactions occur simultaneously and in competition at the same active site. The chain is Ribulose bisphosphate carboxylase large chain from Phelline comosa.